A 360-amino-acid chain; its full sequence is Sorbitol dehydrogenase (360 aa).

Zn(2+) is bound at residue cysteine 42. Tyrosine 48 serves as a coordination point for substrate. Residues histidine 67 and glutamate 68 each coordinate Zn(2+). A substrate-binding site is contributed by glutamate 153. NAD(+)-binding positions include aspartate 201, arginine 206, 277–279 (AGN), and 301–303 (SFR). Positions 303 and 304 each coordinate substrate.

It belongs to the zinc-containing alcohol dehydrogenase family. As to quaternary structure, homotetramer. Requires Zn(2+) as cofactor.

The enzyme catalyses keto-D-fructose + NADH + H(+) = D-sorbitol + NAD(+). Polyol dehydrogenase that catalyzes the reversible NAD(+)-dependent oxidation of various sugar alcohols. Is active with D-sorbitol (D-glucitol) as substrate, leading to the C2-oxidized product D-fructose. Suppresses growth arrest induced by a p53 tumor mutant in fission yeast. This is Sorbitol dehydrogenase (tms1) from Schizosaccharomyces pombe (strain 972 / ATCC 24843) (Fission yeast).